Consider the following 757-residue polypeptide: Protein lsd90 (757 aa).

Polar residues-rich tracts occupy residues 1–11, 19–36, 51–69, and 94–118; these read MVGTINESMQN, TAQS…SSSK, TAGN…SKNL, and DTSN…STYE. 4 disordered regions span residues 1 to 131, 224 to 244, 589 to 633, and 657 to 757; these read MVGT…SRSS, ERAR…EKQA, AQAE…KSKS, and AYVG…MSNK. Positions 166 to 604 form a coiled coil; the sequence is DEKTLQDLLE…KVESEYNSVK (439 aa). The segment covering 589–598 has biased composition (basic and acidic residues); it reads AQAEQSKVES. A compositionally biased stretch (polar residues) spans 619–632; it reads VTTNEPTDVSTKSK. Residues 674–693 are compositionally biased toward low complexity; it reads STPSTLPTSASTNAAATTTT. Residue 718 to 725 participates in ATP binding; that stretch reads GTTGLGKS.

In terms of biological role, may be involved in the metabolism of very long-chain fatty acid-containing phospholipids (VLCFA-PL). The protein is Protein lsd90 (lsd90) of Schizosaccharomyces pombe (strain 972 / ATCC 24843) (Fission yeast).